We begin with the raw amino-acid sequence, 226 residues long: ATP-dependent dethiobiotin synthetase BioD (226 aa).

12 to 17 is a binding site for ATP; the sequence is GVGKTV. Threonine 16 is a binding site for Mg(2+). Lysine 37 is a catalytic residue. Threonine 41 serves as a coordination point for substrate. Residues aspartate 49, 108–111, 169–170, and 197–199 each bind ATP; these read EGAG, GS, and PAG. Mg(2+) is bound by residues aspartate 49 and glutamate 108.

The protein belongs to the dethiobiotin synthetase family. As to quaternary structure, homodimer. Requires Mg(2+) as cofactor.

The protein localises to the cytoplasm. The enzyme catalyses (7R,8S)-7,8-diammoniononanoate + CO2 + ATP = (4R,5S)-dethiobiotin + ADP + phosphate + 3 H(+). The protein operates within cofactor biosynthesis; biotin biosynthesis; biotin from 7,8-diaminononanoate: step 1/2. In terms of biological role, catalyzes a mechanistically unusual reaction, the ATP-dependent insertion of CO2 between the N7 and N8 nitrogen atoms of 7,8-diaminopelargonic acid (DAPA, also called 7,8-diammoniononanoate) to form a ureido ring. The polypeptide is ATP-dependent dethiobiotin synthetase BioD (Mycobacterium bovis (strain BCG / Pasteur 1173P2)).